The primary structure comprises 592 residues: Syntaxin-binding protein 3 (592 aa).

Residues 1–255 (MAPPVSERGL…STVLHELTFQ (255 aa)) are mediates interaction with DOC2B.

It belongs to the STXBP/unc-18/SEC1 family. As to quaternary structure, interacts with STX4. Interacts with DOC2B; the interaction is direct, occurs at the cell membrane, excludes interaction with STX4 and regulates glucose-stimulated insulin secretion. Phosphorylated by PKC in platelets in response to thrombin stimulation; phosphorylation inhibits binding to STX4. As to expression, ubiquitously expressed in all tissues tested.

It is found in the cytoplasm. It localises to the cytosol. The protein localises to the cell membrane. Together with STX4 and VAMP2, may play a role in insulin-dependent movement of GLUT4 and in docking/fusion of intracellular GLUT4-containing vesicles with the cell surface in adipocytes. This Mus musculus (Mouse) protein is Syntaxin-binding protein 3 (Stxbp3).